The primary structure comprises 115 residues: T-cell receptor gamma chain V region V108B (115 aa).

The signal sequence occupies residues 1–18 (MLLLRWPTFCCLWVFGLG). A v segment region spans residues 19 to 115 (QLEQTELSVT…EATYYCAVWI (97 aa)).

In Mus musculus (Mouse), this protein is T-cell receptor gamma chain V region V108B (Tcrg-V1).